An 876-amino-acid polypeptide reads, in one-letter code: SED5-binding protein 2 (876 aa).

Position 51 is a phosphoserine (S51). Residues 164 to 189 are zinc finger-like; it reads CRRCRSYMNPFVVFINQGRKWQCNIC. Acidic residues predominate over residues 300–324; sequence VSDEDDEESDGEEEDEDEEEEDVDN. Positions 300–326 are disordered; that stretch reads VSDEDDEESDGEEEDEDEEEEDVDNSE.

It belongs to the SEC23/SEC24 family. SEC24 subfamily. As to quaternary structure, COPII is composed of at least five proteins: the SEC23/24 complex, the SEC13/31 complex and SAR1. Interacts with GRH1.

The protein localises to the cytoplasm. Its subcellular location is the golgi apparatus membrane. It localises to the endoplasmic reticulum membrane. Component of the COPII coat, that covers ER-derived vesicles involved in transport from the endoplasmic reticulum to the Golgi apparatus. COPII acts in the cytoplasm to promote the transport of secretory, plasma membrane, and vacuolar proteins from the endoplasmic reticulum to the Golgi complex. The sequence is that of SED5-binding protein 2 (SFB2) from Saccharomyces cerevisiae (strain ATCC 204508 / S288c) (Baker's yeast).